A 693-amino-acid chain; its full sequence is Elongation factor G (693 aa).

The tr-type G domain occupies Glu-8 to Leu-282. GTP-binding positions include Ala-17–Thr-24, Asp-81–His-85, and Asn-135–Asp-138.

This sequence belongs to the TRAFAC class translation factor GTPase superfamily. Classic translation factor GTPase family. EF-G/EF-2 subfamily.

Its subcellular location is the cytoplasm. Catalyzes the GTP-dependent ribosomal translocation step during translation elongation. During this step, the ribosome changes from the pre-translocational (PRE) to the post-translocational (POST) state as the newly formed A-site-bound peptidyl-tRNA and P-site-bound deacylated tRNA move to the P and E sites, respectively. Catalyzes the coordinated movement of the two tRNA molecules, the mRNA and conformational changes in the ribosome. The sequence is that of Elongation factor G from Staphylococcus carnosus (strain TM300).